The primary structure comprises 198 residues: SOSS complex subunit B2 (198 aa).

A DNA-binding region (OB) is located at residues 26–89; it reads IVLEIGRVTK…SMWKGCLTLY (64 aa). The segment at 114-198 is disordered; sequence EPNPDYRGQQ…ARDPRRAFKR (85 aa). Composition is skewed to polar residues over residues 136–151 and 173–188; these read STNTFGPVGNGDQTGP and LPGTPSSQTVRTTISN.

The protein belongs to the SOSS-B family. SOSS-B2 subfamily. Component of the SOSS complex, composed of SOSS-B (SOSS-B1/NABP2 or SOSS-B2/NABP1), SOSS-A/INTS3 and SOSS-C/INIP. SOSS complexes containing SOSS-B1/NABP2 are more abundant than complexes containing SOSS-B2/NABP1. As to expression, ubiquitous with high expression in the thymus.

It localises to the nucleus. Functionally, component of the SOSS complex, a multiprotein complex that functions downstream of the MRN complex to promote DNA repair and G2/M checkpoint. In the SOSS complex, acts as a sensor of single-stranded DNA that binds to single-stranded DNA, in particular to polypyrimidines. The SOSS complex associates with DNA lesions and influences diverse endpoints in the cellular DNA damage response including cell-cycle checkpoint activation, recombinational repair and maintenance of genomic stability. Required for efficient homologous recombination-dependent repair of double-strand breaks (DSBs) and ATM-dependent signaling pathways. This Mus musculus (Mouse) protein is SOSS complex subunit B2 (Nabp1).